We begin with the raw amino-acid sequence, 1171 residues long: MERKQTQMILGRRLAKDSPEVKHFQRKSSVVPFGRDGRAATNFTCWTADCPAVKADPTLVFAKCIVVGGSMDTQLELEQVDPPARGTFTVAPTDVFNANELIEPETVDDIGYLPHTNVACVLDVLKSRFLRSIIYTTAEPLLVAINPFKDLGNTTDAWISTYRNASKPEMLPPHVFKTARAALEDLEGYKKNQSIIVSGESGAGKTEATKQIMRFFASASSEVRTTIQDTIMAGNPILEAFGNAKTIRNNNSSRFGRFMMLDVSSHRGIQHGSISNFLLEKVRVVSQEANERSYHIFYQLLKGATSEMRAKYHLRSLKEYAYLNGKNGGCYDVPGIDDKADFEEVLQSLDAMQITGSKRHSVFSILSGLLLIGNVSIEGKDAQGVPDAAYISPQSEEILEEACQLLSVDDAALKKEILVKSTKVGPQVIEGVRTKDEAKTSVLSLSKNVYDKLFDWLVRQLNSLIDAPDGMPNFIGILDIFGFEVLEVNSLEQVLINITNEYLQKHFIDVVFDMETKLYQAEGVPTEALEYTDNLALVGALCGKNDSFFALLEDACLGIRSTDEGFCGTILRRLEPSGFFLESRRDKRLKFIIRHTIADIEYTCEGMLEKNKDFLRKEVMDVMKASTDPVTKALFEGIEIEAGKIGKGTLIASRFLKNLEEMIGIVAQTEAHFIRCLKPNEEKKPLGWNGSKVLNQLFSLSILEALQLRQVGYAYRRNFSEFCSHFRWLDLGLVNSDRDRKEVAQLLLEQSGIPESSWVIGKTMVFVKPDAAKELSILQREKLMCFQPLIAVLGPMWRKVLLRKKMARVIHFLTRLESNARRHLEPDSINISPEEREALLSGMERPRNPCVVVKKRVEPERAPPTKVLSLSRARLSLSKELPRNYAASNEALDVDDTMSVDTDAFLRLKMKRSPNENYLRQTALARLKERRPSHVCMEEAYHVWRSVELLFREPLSDKRLQNICTVIRNDMDQHYGFFWQVIINRTPNFGMAATHIHGSLHVVEQEGMYRDGRQFLFHLIMYKTRKPRKEEIRLHERAAEKTYGICRKRDFSGIVRVMNSKVPPYMQKDVSYLIGMLFQRYQYTRDWTNFATCIQSYLIGRYSEPFGGAWNVVAQEGAFFLSRLWTKHSRFLRVEIDFPALAEQASSEPCPGCPTPVLTVVCFEACAPDRP.

In terms of domain architecture, Myosin motor spans 105–780 (ETVDDIGYLP…AAKELSILQR (676 aa)). 199-206 (GESGAGKT) provides a ligand contact to ATP. The tract at residues 671 to 681 (AHFIRCLKPNE) is actin-binding. Positions 810–1171 (IHFLTRLESN…CFEACAPDRP (362 aa)) are tail.

This sequence belongs to the TRAFAC class myosin-kinesin ATPase superfamily. Myosin family.

It localises to the cytoplasm. Its function is as follows. Myosins are actin-based motor molecules with ATPase activity. Unconventional myosins serve in intracellular movements. Their highly divergent tails are presumed to bind to membranous compartments, which would be moved relative to actin filaments. Plays a role in proper daughter cell budding and separation. The polypeptide is Myosin-B/C (Toxoplasma gondii).